The following is a 253-amino-acid chain: UPF0280 protein Mbar_A3697 (253 aa).

It belongs to the UPF0280 family.

This is UPF0280 protein Mbar_A3697 from Methanosarcina barkeri (strain Fusaro / DSM 804).